Reading from the N-terminus, the 367-residue chain is Putative F-box protein At3g21120 (367 aa).

The F-box domain maps to 1–43; sequence MHLPEDLVLEILSKVPAVSLARFRSTCRRWNALVVDGSFAKKH.

The polypeptide is Putative F-box protein At3g21120 (Arabidopsis thaliana (Mouse-ear cress)).